The chain runs to 880 residues: Alanine--tRNA ligase (880 aa).

The Zn(2+) site is built by His-565, His-569, Cys-675, and His-679.

This sequence belongs to the class-II aminoacyl-tRNA synthetase family. It depends on Zn(2+) as a cofactor.

The protein localises to the cytoplasm. It carries out the reaction tRNA(Ala) + L-alanine + ATP = L-alanyl-tRNA(Ala) + AMP + diphosphate. Catalyzes the attachment of alanine to tRNA(Ala) in a two-step reaction: alanine is first activated by ATP to form Ala-AMP and then transferred to the acceptor end of tRNA(Ala). Also edits incorrectly charged Ser-tRNA(Ala) and Gly-tRNA(Ala) via its editing domain. The sequence is that of Alanine--tRNA ligase from Granulibacter bethesdensis (strain ATCC BAA-1260 / CGDNIH1).